Reading from the N-terminus, the 186-residue chain is uncharacterized protein (186 aa).

This is an uncharacterized protein from Caenorhabditis elegans.